Here is a 317-residue protein sequence, read N- to C-terminus: Ataxin-3 homolog (317 aa).

One can recognise a Josephin domain in the interval 7 to 178 (INSIFFEHQE…RSDADDLISL (172 aa)). Cys20 acts as the Nucleophile in catalysis. Catalysis depends on His117, which acts as the Proton acceptor. Residue Asn132 is part of the active site. UIM domains follow at residues 219–239 (SQEE…KDGS) and 247–264 (EIDE…QAPG). The segment at 254 to 317 (RKAIELSQAP…KKKEERNDEK (64 aa)) is disordered. Residues 276–293 (RSRSSTPPGASEPFSNAE) show a composition bias toward polar residues. Over residues 294-317 (QQRRDRQKFLERFEKKKEERNDEK) the composition is skewed to basic and acidic residues. The tract at residues 296-299 (RRDR) is interaction with cdc-48.1 and cdc-48.2.

In terms of assembly, forms a complex composed of deubiquitinating enzyme atx-3, adapter ubxn-5 and cdc-48.1. Forms a complex composed of deubiquitinating enzyme atx-3, E4 ubiquitin-protein ligase ufd-2 and cdc-48.1. Interacts (via RRDR motif) with cdc-48.1 (via N-terminus) and cdc-48.2 (via N-terminus); the interaction with cdc-48.1 is not required for atx-3 enzymatic activity. Interacts (via C-terminus) with ubxn-5. May interact with ned-8. As to expression, expressed in germline (at protein level). Expressed in spermatheca, pharynx, dorsal and ventral cords, some head neurons, hypodermis, body wall muscles and coelomocytes.

The protein resides in the cytoplasm. It localises to the nucleus. It is found in the nucleolus. It carries out the reaction Thiol-dependent hydrolysis of ester, thioester, amide, peptide and isopeptide bonds formed by the C-terminal Gly of ubiquitin (a 76-residue protein attached to proteins as an intracellular targeting signal).. Acts as a chain editing deubiquitinating enzyme that binds and cleaves 'Lys-48'-linked polyubiquitin chains, with a preference for chains containing four or more ubiquitin molecules thereby modulating protein degradation by the ubiquitin-proteasome pathway. Probably by regulating the IGF-1-insulin-like pathway, regulates lifespan. Regulates germline DNA double-strand-break repair and apoptosis in response to DNA damage by recruiting E4 ubiquitin-protein ligase ufd-2 to DNA repair foci. Interacts with key regulators of transcription and represses transcription. Acts as a histone-binding protein that regulates transcription. The protein is Ataxin-3 homolog (atx-3) of Caenorhabditis elegans.